The primary structure comprises 91 residues: Large ribosomal subunit protein uL23c (91 aa).

Belongs to the universal ribosomal protein uL23 family. Part of the 50S ribosomal subunit.

Its subcellular location is the plastid. The protein localises to the chloroplast. Its function is as follows. Binds to 23S rRNA. This Pinus koraiensis (Korean pine) protein is Large ribosomal subunit protein uL23c (rpl23).